Reading from the N-terminus, the 479-residue chain is GMP reductase (479 aa).

CBS domains lie at 96–153 (VLDT…VRDI) and 154–212 (AVTD…ATDS). NADP(+) contacts are provided by residues 246-248 (DTA) and 296-298 (GVG). Cysteine 303 (thioimidate intermediate) is an active-site residue.

It belongs to the IMPDH/GMPR family. GuaB1 subfamily. The cofactor is a monovalent cation.

The catalysed reaction is IMP + NH4(+) + NADP(+) = GMP + NADPH + 2 H(+). Its pathway is purine metabolism; IMP biosynthesis via salvage pathway. Involved in the purine-salvage pathway. Catalyzes the NADPH-dependent conversion of GMP to IMP. In Mycobacterium bovis (strain ATCC BAA-935 / AF2122/97), this protein is GMP reductase.